Consider the following 41-residue polypeptide: Photosystem I reaction center subunit IX (41 aa).

The chain crosses the membrane as a helical span at residues 7 to 27 (YLSTAPVLLTIWLTFTAGFII).

This sequence belongs to the PsaJ family.

The protein localises to the plastid. Its subcellular location is the chloroplast thylakoid membrane. Its function is as follows. May help in the organization of the PsaE and PsaF subunits. The polypeptide is Photosystem I reaction center subunit IX (Phaeodactylum tricornutum (strain CCAP 1055/1)).